The chain runs to 649 residues: Mediator of RNA polymerase II transcription subunit 17 (649 aa).

Positions 51–79 are disordered; it reads QGSGSEEEEAAGPDGDAPDWGGAGADQDD.

This sequence belongs to the Mediator complex subunit 17 family. Component of the Mediator complex, which is composed of MED1, MED4, MED6, MED7, MED8, MED9, MED10, MED11, MED12, MED13, MED13L, MED14, MED15, MED16, MED17, MED18, MED19, MED20, MED21, MED22, MED23, MED24, MED25, MED26, MED27, MED29, MED30, MED31, CCNC, CDK8 and CDC2L6/CDK11. The MED12, MED13, CCNC and CDK8 subunits form a distinct module termed the CDK8 module. Mediator containing the CDK8 module is less active than Mediator lacking this module in supporting transcriptional activation. Individual preparations of the Mediator complex lacking one or more distinct subunits have been variously termed ARC, CRSP, DRIP, PC2, SMCC and TRAP. Interacts with STAT2. Interacts with GATA1 and PPARG.

It is found in the nucleus. Component of the Mediator complex, a coactivator involved in the regulated transcription of nearly all RNA polymerase II-dependent genes. Mediator functions as a bridge to convey information from gene-specific regulatory proteins to the basal RNA polymerase II transcription machinery. Mediator is recruited to promoters by direct interactions with regulatory proteins and serves as a scaffold for the assembly of a functional preinitiation complex with RNA polymerase II and the general transcription factors. This Mus musculus (Mouse) protein is Mediator of RNA polymerase II transcription subunit 17 (Med17).